The chain runs to 704 residues: Tetratricopeptide repeat protein 12 (704 aa).

Threonine 71 is subject to Phosphothreonine. TPR repeat units follow at residues 105 to 138 (ADALKEKGNEAFVRGDYETAIFFYSEGLGKLKDM), 139 to 172 (KVLYTNRAQAFIKLGDYQKALVDCDWALKCDENC), and 173 to 206 (TKAYFHMGKAHVALKNYSKAKECYQKIEEINPKL).

It localises to the cytoplasm. Cytoplasmic protein that plays a role in the proper assembly of dynein arm complexes in motile cilia in both respiratory cells and sperm flagella. In Mus musculus (Mouse), this protein is Tetratricopeptide repeat protein 12 (Ttc12).